We begin with the raw amino-acid sequence, 144 residues long: HTH-type transcriptional regulator LrpC (144 aa).

Residues 3–64 form the HTH asnC-type domain; it reads LDQIDLNIIE…EVDQKKLGLP (62 aa). Residues 22–41 constitute a DNA-binding region (H-T-H motif); sequence MRELGRKIKLSPPSVTERVR.

In terms of biological role, transcriptional regulator with a possible role in regulation of amino acid metabolism. Plays a role in the growth phase transition. The polypeptide is HTH-type transcriptional regulator LrpC (lrpC) (Bacillus subtilis (strain 168)).